We begin with the raw amino-acid sequence, 673 residues long: Probable potassium transport system protein Kup 1 (673 aa).

13 helical membrane passes run Gly-14 to Tyr-34, Leu-58 to Leu-78, Trp-101 to Pro-121, Leu-147 to Gly-167, Phe-175 to Phe-195, Gly-196 to Pro-216, Ala-220 to Ser-240, Val-252 to Leu-272, Leu-294 to Ile-314, Leu-345 to Phe-365, Ala-374 to Leu-394, Val-403 to Ser-423, and Phe-427 to Ile-447.

This sequence belongs to the HAK/KUP transporter (TC 2.A.72) family.

The protein resides in the cell membrane. It carries out the reaction K(+)(in) + H(+)(in) = K(+)(out) + H(+)(out). Transport of potassium into the cell. Likely operates as a K(+):H(+) symporter. The polypeptide is Probable potassium transport system protein Kup 1 (Lactococcus lactis subsp. cremoris (strain SK11)).